The sequence spans 431 residues: Enolase (431 aa).

Gln-164 contacts (2R)-2-phosphoglycerate. The active-site Proton donor is Glu-206. Mg(2+) contacts are provided by Asp-243, Glu-286, and Asp-313. 4 residues coordinate (2R)-2-phosphoglycerate: Lys-338, Arg-367, Ser-368, and Lys-389. The active-site Proton acceptor is Lys-338.

It belongs to the enolase family. The cofactor is Mg(2+).

The protein localises to the cytoplasm. Its subcellular location is the secreted. The protein resides in the cell surface. It carries out the reaction (2R)-2-phosphoglycerate = phosphoenolpyruvate + H2O. The protein operates within carbohydrate degradation; glycolysis; pyruvate from D-glyceraldehyde 3-phosphate: step 4/5. Functionally, catalyzes the reversible conversion of 2-phosphoglycerate (2-PG) into phosphoenolpyruvate (PEP). It is essential for the degradation of carbohydrates via glycolysis. The chain is Enolase from Chloroflexus aggregans (strain MD-66 / DSM 9485).